Consider the following 223-residue polypeptide: GRF1-interacting factor 3 (223 aa).

The tract at residues 179-223 (ANNAGPNDASGGGKPDGTNMSQSGADGQGGSAARHGGGDAKTEGK) is disordered. Basic and acidic residues predominate over residues 214-223 (GGGDAKTEGK).

The protein belongs to the SS18 family. In terms of assembly, interacts with GRF1. As to expression, predominantly expressed in shoot tips containing the shoot apical meristem (SAM) and flower buds. Also expressed in mature flowers.

In terms of biological role, transcription coactivator that plays a role in the regulation of cell expansion in leaf and cotyledons tissues. Component of a network formed by miR396, the GRFs and their interacting factors (GIFs) acting in the regulation of meristem function, at least partially through the control of cell proliferation. GIFs are involved in the positive regulation of cell proliferation of lateral organs in a functionally redundant manner. This Arabidopsis thaliana (Mouse-ear cress) protein is GRF1-interacting factor 3 (GIF3).